Reading from the N-terminus, the 256-residue chain is Imidazole glycerol phosphate synthase subunit HisF (256 aa).

Catalysis depends on residues Asp13 and Asp132.

This sequence belongs to the HisA/HisF family. Heterodimer of HisH and HisF.

The protein localises to the cytoplasm. It catalyses the reaction 5-[(5-phospho-1-deoxy-D-ribulos-1-ylimino)methylamino]-1-(5-phospho-beta-D-ribosyl)imidazole-4-carboxamide + L-glutamine = D-erythro-1-(imidazol-4-yl)glycerol 3-phosphate + 5-amino-1-(5-phospho-beta-D-ribosyl)imidazole-4-carboxamide + L-glutamate + H(+). It functions in the pathway amino-acid biosynthesis; L-histidine biosynthesis; L-histidine from 5-phospho-alpha-D-ribose 1-diphosphate: step 5/9. Its function is as follows. IGPS catalyzes the conversion of PRFAR and glutamine to IGP, AICAR and glutamate. The HisF subunit catalyzes the cyclization activity that produces IGP and AICAR from PRFAR using the ammonia provided by the HisH subunit. The polypeptide is Imidazole glycerol phosphate synthase subunit HisF (Leptospira borgpetersenii serovar Hardjo-bovis (strain JB197)).